We begin with the raw amino-acid sequence, 426 residues long: Enolase (426 aa).

Gln163 is a (2R)-2-phosphoglycerate binding site. Residue Glu205 is the Proton donor of the active site. Mg(2+)-binding residues include Asp242, Glu286, and Asp313. Lys338, Arg367, Ser368, and Lys389 together coordinate (2R)-2-phosphoglycerate. Lys338 acts as the Proton acceptor in catalysis.

It belongs to the enolase family. Mg(2+) is required as a cofactor.

The protein resides in the cytoplasm. It localises to the secreted. Its subcellular location is the cell surface. It carries out the reaction (2R)-2-phosphoglycerate = phosphoenolpyruvate + H2O. It participates in carbohydrate degradation; glycolysis; pyruvate from D-glyceraldehyde 3-phosphate: step 4/5. Catalyzes the reversible conversion of 2-phosphoglycerate (2-PG) into phosphoenolpyruvate (PEP). It is essential for the degradation of carbohydrates via glycolysis. The sequence is that of Enolase from Helicobacter pylori (strain G27).